Reading from the N-terminus, the 90-residue chain is Serine protease inhibitor kazal-like protein, minor form (90 aa).

A signal peptide spans methionine 1–serine 23. Residues valine 33–tyrosine 89 form the Kazal-like domain. Asparagine 38 is a glycosylation site (N-linked (GlcNAc...) asparagine).

Luminal fluid and mucosal folds of the seminal vesicles (at protein level). Not detected in brain, heart, lung, liver, kidney, stomach, small intestine, muscle, skin, thymus, placenta or bladder.

It is found in the secreted. Its function is as follows. Does not function as an inhibitor of trypsin, chymotrypsin, subtilisin or elastase. Binds sperm and enhances sperm motility. May act as a decapacitation factor, suppresses BSA-stimulated sperm capacitation and blocks sperm-oocyte interactions in vitro. The protein is Serine protease inhibitor kazal-like protein, minor form (Spinkl) of Mus musculus (Mouse).